A 242-amino-acid polypeptide reads, in one-letter code: EFCDFSGNQAAGGVMVMDTSSPELRQSSSGSDVLNATSSTSSHQVSGDVAGYLNVPSPESNGSNHEGSRESANDNKGLGDARVLNCHSPESQGSGNYGSNVSEGLNYPSDSNKSVHSSPNFENNSIKNGAVEEKIKLEGVNANISKCSSLLKRKKSSEDSNNINIHQKLTNVALSDNVNNDEDEKKRARLVRNRESAQLSRQRKKHYVEELEDKVRIMHSTIQDLNAKVAYIIAENATLKTQ.

Residues glutamate 1–serine 125 form a disordered region. The segment covering aspartate 18–valine 45 has biased composition (polar residues). Residues glutamate 66–glycine 79 show a composition bias toward basic and acidic residues. Positions serine 88–serine 125 are enriched in polar residues. A bZIP domain is found at aspartate 183–glutamine 242. The basic motif stretch occupies residues lysine 185–arginine 216. Positions leucine 225 to leucine 239 are leucine-zipper.

It belongs to the bZIP family.

The protein localises to the nucleus. Its function is as follows. Binds specifically to the DNA sequence 5'-TGACG-3'. The sequence is that of TGACG-sequence-specific DNA-binding protein TGA-1B (TGA1B) from Nicotiana tabacum (Common tobacco).